The following is a 426-amino-acid chain: UDP-N-acetylglucosamine 1-carboxyvinyltransferase (426 aa).

Residue 22–23 (KN) participates in phosphoenolpyruvate binding. Arg-94 lines the UDP-N-acetyl-alpha-D-glucosamine pocket. Residue Cys-118 is the Proton donor of the active site. At Cys-118 the chain carries 2-(S-cysteinyl)pyruvic acid O-phosphothioketal. Residues 123 to 127 (RPVDL), Asp-309, and Ile-331 each bind UDP-N-acetyl-alpha-D-glucosamine.

The protein belongs to the EPSP synthase family. MurA subfamily.

The protein localises to the cytoplasm. The enzyme catalyses phosphoenolpyruvate + UDP-N-acetyl-alpha-D-glucosamine = UDP-N-acetyl-3-O-(1-carboxyvinyl)-alpha-D-glucosamine + phosphate. It functions in the pathway cell wall biogenesis; peptidoglycan biosynthesis. Its function is as follows. Cell wall formation. Adds enolpyruvyl to UDP-N-acetylglucosamine. The sequence is that of UDP-N-acetylglucosamine 1-carboxyvinyltransferase from Paracoccus denitrificans (strain Pd 1222).